Here is a 481-residue protein sequence, read N- to C-terminus: UDP-glycosyltransferase 72E2 (481 aa).

The active-site Proton acceptor is H18. Position 18 (H18) interacts with an anthocyanidin. D111 (charge relay) is an active-site residue. 6 residues coordinate UDP-alpha-D-glucose: A346, Q348, H363, W366, S368, and E371. An anthocyanidin is bound at residue A386. Residues E387 and Q388 each coordinate UDP-alpha-D-glucose.

Belongs to the UDP-glycosyltransferase family. In terms of tissue distribution, expressed in seedlings and roots.

It catalyses the reaction (E)-4-coumarate + UDP-alpha-D-glucose = 4-O-(beta-D-glucosyl)-trans-4-coumarate + UDP + H(+). The enzyme catalyses (E)-coniferol + UDP-alpha-D-glucose = 4-O-(beta-D-glucosyl)-(E)-coniferol + UDP + H(+). The catalysed reaction is (E)-sinapyl alcohol + UDP-alpha-D-glucose = 4-O-(beta-D-glucosyl)-trans-4-sinapoyl alcohol + UDP + H(+). It carries out the reaction (E)-sinapate + UDP-alpha-D-glucose = 4-O-(beta-D-glucosyl)-trans-sinapate + UDP + H(+). It catalyses the reaction (E)-coniferaldehyde + UDP-alpha-D-glucose = 4-O-(beta-D-glucosyl)-4-(E)-coniferyl aldehyde + UDP + H(+). The enzyme catalyses (E)-sinapaldehyde + UDP-alpha-D-glucose = 4-O-(beta-D-glucosyl)-4-trans-sinapoyl aldehyde + UDP + H(+). Its function is as follows. Involved in the O-glucosylation of monolignols (alcohol monomers of lignin). Glucosylates coniferyl alcohol to form coniferyl alcohol 4-O-glucoside. Glucosylates sinapyl alcohol to form sinapyl alcohol 4-O-glucoside. Glucosylates coniferyl aldehyde to form coniferyl aldehyde 4-O-glucoside. Glucosylates sinapyl aldehyde to form sinapyl aldehyde 4-O-glucoside. Possesses low activity with sinapate and ferulate as substrates. This is UDP-glycosyltransferase 72E2 from Arabidopsis thaliana (Mouse-ear cress).